The chain runs to 1355 residues: Collagen alpha-2(I) chain (1355 aa).

Positions 1-22 (MLSFVDLRSVLLLAVTLYLVTC) are cleaved as a signal peptide. At glutamine 23 the chain carries Pyrrolidone carboxylic acid. Positions 23-71 (QEVRRGPRGDKGPPGEQGPPGIPGRDGEDGLPGLPGPPGVPGLGGNFAA) are cleaved as a propeptide — N-terminal propeptide. The span at 26-35 (RRGPRGDKGP) shows a compositional bias: basic and acidic residues. A disordered region spans residues 26–1111 (RRGPRGDKGP…GDGGEYYRAD (1086 aa)). A Pyrrolidone carboxylic acid modification is found at glutamine 72. Lysine 77 carries the allysine modification. The segment covering 99 to 108 (PGSQGFQGLP) has biased composition (low complexity). Residues 132–146 (AGEDGHPGKSGRPGE) show a composition bias toward basic and acidic residues. A 5-hydroxylysine; alternate modification is found at lysine 168. Residue lysine 168 is glycosylated (O-linked (Gal...) hydroxylysine; alternate). The span at 218-267 (PAGSAGSRGSDGSSGPVGPAGPIGSAGAPGLPGAPGAKGELGPAGNNGPT) shows a compositional bias: low complexity. Residues 276-290 (PGPPGSLGPAGPPGN) are compositionally biased toward pro residues. Over residues 291 to 303 (PGTNGVNGAKGTA) the composition is skewed to low complexity. A compositionally biased stretch (gly residues) spans 304–322 (GLPGVGGAPGLPGGRGIPG). Residues 327-336 (AGPSGARGLA) show a composition bias toward low complexity. Gly residues-rich tracts occupy residues 340 to 349 (GIAGGKGDTG) and 403 to 412 (GRAGGIGPAG). Composition is skewed to low complexity over residues 413–426 (SRGS…RGPN) and 465–495 (EGRS…NGEP). Composition is skewed to gly residues over residues 523-532 (GPAGLGGATG) and 586-595 (GESGGAGPHG). The segment covering 596–618 (PSGSRGPSGAPGPDGQKGEPGAA) has biased composition (low complexity). A compositionally biased stretch (gly residues) spans 619–628 (GLNGGLGPSG). 3 stretches are compositionally biased toward low complexity: residues 659–675 (NPGR…AGAP), 687–701 (SGPA…PRGA), and 708–726 (AGPA…AGHT). A compositionally biased stretch (basic and acidic residues) spans 728–738 (AKGDRGAKGPK). Composition is skewed to low complexity over residues 741 to 767 (AGSP…STGA) and 776 to 788 (ATGF…RAGA). A compositionally biased stretch (basic and acidic residues) spans 804 to 813 (PGKDGSRGPR). The segment covering 852–869 (AGPSGVLGARGILGLPGT) has biased composition (low complexity). Residues 874 to 883 (GLPGGPGSNG) show a composition bias toward gly residues. Low complexity-rich tracts occupy residues 884–912 (EPGP…VGHS) and 947–966 (PSGL…AGKS). Residues 967 to 976 (GNRGEGGPSG) are compositionally biased toward gly residues. Basic and acidic residues predominate over residues 996 to 1014 (RGDKGEAGERGARGLDGRK). Residues 1019-1041 (LSGLPGPSGTPGETGPSGSVGPV) show a composition bias toward low complexity. A compositionally biased stretch (pro residues) spans 1080–1091 (AGPPGPPGPPGH). The span at 1093–1105 (GPSGGGYDGGDGG) shows a compositional bias: gly residues. A propeptide spans 1111–1355 (DQPERKPKDY…GFEIGPVCFK (245 aa)) (C-terminal propeptide). Residues 1120 to 1355 (YEVDATLKSL…GFEIGPVCFK (236 aa)) enclose the Fibrillar collagen NC1 domain. Intrachain disulfides connect cysteine 1150/cysteine 1182, cysteine 1190/cysteine 1353, and cysteine 1261/cysteine 1306. Positions 1168, 1170, 1171, 1173, and 1176 each coordinate Ca(2+). N-linked (GlcNAc...) asparagine glycans are attached at residues asparagine 1206 and asparagine 1256.

This sequence belongs to the fibrillar collagen family. As to quaternary structure, trimers of one alpha 2(I) and two alpha 1(I) chains. Post-translationally, prolines at the third position of the tripeptide repeating unit (G-X-Y) are hydroxylated in some or all of the chains. In terms of tissue distribution, forms the fibrils of tendon, ligaments and bones. In bones the fibrils are mineralized with calcium hydroxyapatite.

Its subcellular location is the secreted. It is found in the extracellular space. The protein localises to the extracellular matrix. Its function is as follows. Type I collagen is a member of group I collagen (fibrillar forming collagen). The chain is Collagen alpha-2(I) chain (COL1A2) from Aquarana catesbeiana (American bullfrog).